Consider the following 962-residue polypeptide: Leucine-rich repeat-containing G-protein coupled receptor 6 (962 aa).

The N-terminal stretch at 1–16 is a signal peptide; the sequence is MLVVLLILHAVSCAHS. Residues 20-60 enclose the LRRNT domain; the sequence is PGAAVPVKQCPSACQCEEDGILLLVDCSEQGLSSVPTDLSP. LRR repeat units lie at residues 38-58, 59-82, 83-106, 107-131, 133-154, 155-178, 179-202, 203-226, 228-250, 251-273, 275-297, 298-321, 322-344, 345-368, 370-390, 391-414, and 416-438; these read DGIL…PTDL, SPLT…AFRN, LHFL…MLQG, LYNL…PWEL, NLLS…TLSG, MRSL…ALND, LSSL…AFRN, LSNL…CFEG, HSLE…IRTL, AKLQ…AFVG, PLLQ…AFQF, LPKL…LKGT, TSLQ…LCHL, LPKL…YHCT, LQEI…TFQQ, LGSL…AFFS, and QSLI…GLTS. The N-linked (GlcNAc...) asparagine glycan is linked to Asn-71. Asn-202 carries N-linked (GlcNAc...) asparagine glycosylation. The next 7 helical transmembrane spans lie at 559 to 579, 590 to 610, 647 to 669, 679 to 699, 723 to 743, 766 to 786, and 801 to 821; these read GMWL…LTVF, FIIG…GTLA, SILF…RAYG, AAAV…LIGV, FMVA…GTYI, VAWL…LTFS, and SVVL…YLLF. A disulfide bridge links Cys-633 with Cys-708.

It belongs to the G-protein coupled receptor 1 family.

Its subcellular location is the cell membrane. In terms of biological role, receptor for R-spondins that potentiates the canonical Wnt signaling pathway. Upon binding to R-spondins (rspo1, rspo2, rspo3 or rspo4), associates with phosphorylated lrp6 and frizzled receptors that are activated by extracellular Wnt receptors, triggering the canonical Wnt signaling pathway to increase expression of target genes. In contrast to classical G-protein coupled receptors, does not activate heterotrimeric G-proteins to transduce the signal. The chain is Leucine-rich repeat-containing G-protein coupled receptor 6 (lgr6) from Danio rerio (Zebrafish).